We begin with the raw amino-acid sequence, 477 residues long: MFPVFPCTLLAPPFPVLGLDSRGVGGLMNSFPPPQGHAQNPLQVGAELQSRFFASQGCAQSPFQAAPAPPPTPQAPAAEPLQVDLLPVLAAAQESAAAAAAAAAAAAAVAAAPPAPAAASTVDTAALKQPPAPPPPPPPVSAPAAEAAPPASAATIAAAAATAVVAPTSTVAVAPVASALEKKTKSKGPYICALCAKEFKNGYNLRRHEAIHTGAKAGRVPSGAMKMPTMVPLSLLSVPQLSGAGGGGGEAGAGGGAAAVAAGGVVTTTASGKRIRKNHACEMCGKAFRDVYHLNRHKLSHSDEKPYQCPVCQQRFKRKDRMSYHVRSHDGAVHKPYNCSHCGKSFSRPDHLNSHVRQVHSTERPFKCEKCEAAFATKDRLRAHTVRHEEKVPCHVCGKMLSSAYISDHMKVHSQGPHHVCELCNKGTGEVCPMAAAAAAAAAAAAAAVAAPPTAVGSLSGAEGVPVSSQPLPSQPW.

Disordered stretches follow at residues A59–A78 and T121–E146. Residues P130–S141 show a composition bias toward pro residues. C2H2-type zinc fingers lie at residues Y190 to H212, H279 to H301, Y307 to H329, and Y337 to H360. Phosphoserine is present on S361. The segment at F366–H388 adopts a C2H2-type 5 zinc-finger fold. Residues V392–H413 form a C2H2-type 6; atypical zinc finger.

As to quaternary structure, interacts with BPTF. In terms of assembly, forms a heterodimer with MAZ isoform 2; the interaction inhibits MAZ isoform 1-mediated transcription activation. Forms a heterodimer with MAZ isoform 1; the interaction inhibits MAZ isoform 1-mediated transcription activation. Present in kidney, liver and brain. In the brain, highest levels are found in motor cortex and midfrontal cortex (at protein level). In terms of tissue distribution, expressed in the heart, brain, placenta, lung, liver, skeletal muscle and weakly expressed in the kidney. Expressed in the joint synovium.

The protein resides in the nucleus. In terms of biological role, transcriptional regulator, potentially with dual roles in transcription initiation and termination. Functionally, binds DNA and functions as a transcriptional activator. Binds to two G/A-rich sites, ME1a1 and ME1a2, within the MYC promoter having greater affinity for the former. Also binds to multiple G/C-rich sites within the promoter of the Sp1 family of transcription factors. Its function is as follows. Binds DNA and functions as a transcriptional activator. Inhibits MAZ isoform 1-mediated transcription. Binds DNA and functions as a transcriptional activator. This is Myc-associated zinc finger protein (MAZ) from Homo sapiens (Human).